A 191-amino-acid chain; its full sequence is Cell division protein SepF (191 aa).

The segment at 1-77 (MEGQDDYQLL…MGSNVIGLPG (77 aa)) is disordered.

It belongs to the SepF family. In terms of assembly, homodimer. Interacts with FtsZ.

It localises to the cytoplasm. In terms of biological role, cell division protein that is part of the divisome complex and is recruited early to the Z-ring. Probably stimulates Z-ring formation, perhaps through the cross-linking of FtsZ protofilaments. Its function overlaps with FtsA. The chain is Cell division protein SepF from Synechococcus sp. (strain JA-2-3B'a(2-13)) (Cyanobacteria bacterium Yellowstone B-Prime).